A 426-amino-acid polypeptide reads, in one-letter code: Pregnancy-specific beta-1-glycoprotein 9 (426 aa).

A signal peptide spans 1–34 (MGPLPAPSCTQRITWKGLLLTASLLNFWNPPTTA). The Ig-like V-type domain occupies 35–144 (EVTIEAQPPK…IRHFTFTLYL (110 aa)). N-linked (GlcNAc...) asparagine glycans are attached at residues Asn-104 and Asn-111. A Cell attachment site motif is present at residues 127 to 129 (RGD). 3 consecutive Ig-like C2-type domains span residues 147 to 234 (PKPY…VTLN), 242 to 326 (PYIT…PVIL), and 335 to 410 (PRIY…KSMT). 3 disulfide bridges follow: Cys-169–Cys-217, Cys-262–Cys-310, and Cys-354–Cys-394. Residues Asn-199, Asn-268, Asn-303, and Asn-387 are each glycosylated (N-linked (GlcNAc...) asparagine).

It belongs to the immunoglobulin superfamily. CEA family. As to quaternary structure, interacts with latency-associated peptide; leading to TGFB1 activation.

It is found in the secreted. Its function is as follows. Binds to the small latent transforming growth factor-beta complex, consisting of the N-terminal TGFB1 latency-associated peptide (LAP) and the mature form of TGFB1, thereby leading to the activation of TGFB1. The activation of TGFB1 leads to stimulation of naive CD4(+) T-cells to increase FoxP3 expression and to an increase in the number of FoxP3(+) regulatory T-cells. Induces the differentiation of a suppressive CD4(+)LAP(+)FoxP3(-) T-cell subset. Induces the secretion of TGFB1 in macrophages, but not in activated CD4(+) T-cells. May reduce the expression of several pro-inflammatory cytokines and chemokines by CD4(+) T-cells, including IL2 and IL6. The sequence is that of Pregnancy-specific beta-1-glycoprotein 9 (PSG9) from Homo sapiens (Human).